The chain runs to 504 residues: Syntaphilin (504 aa).

Residues 1 to 74 are disordered; it reads MAMSLQGSRR…HGIKPPTPEQ (74 aa). Composition is skewed to low complexity over residues 7–26 and 33–49; these read GSRRASAGSRRRTSPPVSVR and SLSSSSNSGSCKGSDSS. The stretch at 79 to 161 forms a coiled coil; that stretch reads LQQKEVCIRH…VKNNLIDKDK (83 aa). The interval 191–244 is disordered; it reads VAKEEGTGESAGGSPARSLTRSSTYTKLSDPAVCGDRQAGDPSNTPAEDRADSG. A phosphoserine mark is found at Ser-200 and Ser-204. Residues 207-217 show a composition bias toward polar residues; sequence RSLTRSSTYTK. Thr-214 carries the phosphothreonine modification. Ser-219 carries the phosphoserine modification. Residue Thr-235 is modified to Phosphothreonine. The helical transmembrane segment at 437–456 threads the bilayer; sequence YIVDLLAVVVPAVPTVAWLC.

As to quaternary structure, binds to STX1A. Interacts with DNM1; this interaction inhibits the binding of DNM1 to AMPH and DNM1-receptor-mediated endocytosis.

Its subcellular location is the membrane. The protein resides in the synapse. It is found in the synaptosome. In terms of biological role, inhibits SNARE complex formation by absorbing free STX1A. This chain is Syntaphilin, found in Rattus norvegicus (Rat).